Reading from the N-terminus, the 91-residue chain is uncharacterized protein (91 aa).

3 consecutive transmembrane segments (helical) span residues 4–21 (YAIISFLLGIAFGFLRRG), 28–50 (IIEVIFVSLLLGLVSGIALSHAV), and 60–82 (VKAFGLIVAALIYAIFFAAGTYL).

It is found in the cell membrane. This is an uncharacterized protein from Archaeoglobus fulgidus (strain ATCC 49558 / DSM 4304 / JCM 9628 / NBRC 100126 / VC-16).